The following is a 404-amino-acid chain: Cysteine desulfurase IscS (404 aa).

Residues 75–76 (AT), N155, Q183, and 203–205 (SAH) contribute to the pyridoxal 5'-phosphate site. An N6-(pyridoxal phosphate)lysine modification is found at K206. Position 243 (T243) interacts with pyridoxal 5'-phosphate. Residue C328 is the Cysteine persulfide intermediate of the active site. C328 lines the [2Fe-2S] cluster pocket.

It belongs to the class-V pyridoxal-phosphate-dependent aminotransferase family. NifS/IscS subfamily. As to quaternary structure, homodimer. Forms a heterotetramer with IscU, interacts with other sulfur acceptors. Pyridoxal 5'-phosphate serves as cofactor.

The protein localises to the cytoplasm. It carries out the reaction (sulfur carrier)-H + L-cysteine = (sulfur carrier)-SH + L-alanine. The protein operates within cofactor biosynthesis; iron-sulfur cluster biosynthesis. Its function is as follows. Master enzyme that delivers sulfur to a number of partners involved in Fe-S cluster assembly, tRNA modification or cofactor biosynthesis. Catalyzes the removal of elemental sulfur atoms from cysteine to produce alanine. Functions as a sulfur delivery protein for Fe-S cluster synthesis onto IscU, an Fe-S scaffold assembly protein, as well as other S acceptor proteins. In Shewanella woodyi (strain ATCC 51908 / MS32), this protein is Cysteine desulfurase IscS.